The chain runs to 520 residues: GMP synthase [glutamine-hydrolyzing] (520 aa).

The region spanning 9 to 202 is the Glutamine amidotransferase type-1 domain; that stretch reads KILILDFGSQ…VRQICGCTGQ (194 aa). The Nucleophile role is filled by cysteine 86. Residues histidine 176 and glutamate 178 contribute to the active site. The region spanning 203 to 395 is the GMPS ATP-PPase domain; sequence WTPGQIIEDA…LGLPHPMVYR (193 aa). 230–236 contacts ATP; that stretch reads SGGVDSS.

In terms of assembly, homodimer.

It catalyses the reaction XMP + L-glutamine + ATP + H2O = GMP + L-glutamate + AMP + diphosphate + 2 H(+). It functions in the pathway purine metabolism; GMP biosynthesis; GMP from XMP (L-Gln route): step 1/1. Catalyzes the synthesis of GMP from XMP. This chain is GMP synthase [glutamine-hydrolyzing], found in Syntrophotalea carbinolica (strain DSM 2380 / NBRC 103641 / GraBd1) (Pelobacter carbinolicus).